Reading from the N-terminus, the 447-residue chain is Na(+)-translocating NADH-quinone reductase subunit A (447 aa).

The protein belongs to the NqrA family. In terms of assembly, composed of six subunits; NqrA, NqrB, NqrC, NqrD, NqrE and NqrF.

The enzyme catalyses a ubiquinone + n Na(+)(in) + NADH + H(+) = a ubiquinol + n Na(+)(out) + NAD(+). Functionally, NQR complex catalyzes the reduction of ubiquinone-1 to ubiquinol by two successive reactions, coupled with the transport of Na(+) ions from the cytoplasm to the periplasm. NqrA to NqrE are probably involved in the second step, the conversion of ubisemiquinone to ubiquinol. This chain is Na(+)-translocating NADH-quinone reductase subunit A, found in Neisseria meningitidis serogroup B (strain ATCC BAA-335 / MC58).